We begin with the raw amino-acid sequence, 720 residues long: Engulfment and cell motility protein 3 (720 aa).

Residues 307–479 (EQRDQLQALR…VVREQLARTL (173 aa)) form the ELMO domain. In terms of domain architecture, PH spans 542–664 (RLCEGMLFRK…TDGLSALLGS (123 aa)). An SH3-binding motif is present at residues 696-706 (PEQPPPVPPPP).

Probably interacts directly with the SH3-domain of DOCK1 via its SH3-binding site. Part of a complex with DOCK1 and RAC1. Interacts with ADGRB3.

It is found in the cytoplasm. Functionally, involved in cytoskeletal rearrangements required for phagocytosis of apoptotic cells and cell motility. Acts in association with DOCK1 and CRK. Was initially proposed to be required in complex with DOCK1 to activate Rac Rho small GTPases. May enhance the guanine nucleotide exchange factor (GEF) activity of DOCK1. The chain is Engulfment and cell motility protein 3 (Elmo3) from Mus musculus (Mouse).